Consider the following 525-residue polypeptide: D-arabinono-1,4-lactone oxidase (525 aa).

One can recognise an FAD-binding PCMH-type domain in the interval 20–195 (IYSSRPEWYF…VGATVRVVPA (176 aa)). Histidine 58 bears the Pros-8alpha-FAD histidine mark.

The protein belongs to the oxygen-dependent FAD-linked oxidoreductase family. FAD is required as a cofactor.

Its subcellular location is the mitochondrion membrane. It catalyses the reaction D-arabinono-1,4-lactone + O2 = dehydro-D-arabinono-1,4-lactone + H2O2 + H(+). Its pathway is cofactor biosynthesis; D-erythroascorbate biosynthesis; dehydro-D-arabinono-1,4-lactone from D-arabinose: step 2/2. The sequence is that of D-arabinono-1,4-lactone oxidase (ALO1) from Candida glabrata (strain ATCC 2001 / BCRC 20586 / JCM 3761 / NBRC 0622 / NRRL Y-65 / CBS 138) (Yeast).